The following is a 396-amino-acid chain: Putative transposase y4rJ (396 aa).

This sequence belongs to the transposase 20 family.

The sequence is that of Putative transposase y4rJ from Sinorhizobium fredii (strain NBRC 101917 / NGR234).